The chain runs to 321 residues: Probable protein phosphatase 2C 44 (321 aa).

Disordered stretches follow at residues 1-36 (MVGR…GGKK) and 51-70 (NSSS…NKVT). Over residues 9-31 (SASSSASCSPSSSAAGTSSSSSA) the composition is skewed to low complexity. Over residues 51 to 69 (NSSSTDTGKGRSKQSSNKV) the composition is skewed to polar residues. Residues 70 to 319 (THGFHLVEGK…DDISCIVIRF (250 aa)) form the PPM-type phosphatase domain. Mn(2+)-binding residues include D107, G108, D271, and D310.

Belongs to the PP2C family. Mg(2+) is required as a cofactor. The cofactor is Mn(2+).

It carries out the reaction O-phospho-L-seryl-[protein] + H2O = L-seryl-[protein] + phosphate. It catalyses the reaction O-phospho-L-threonyl-[protein] + H2O = L-threonyl-[protein] + phosphate. In Oryza sativa subsp. japonica (Rice), this protein is Probable protein phosphatase 2C 44.